Consider the following 223-residue polypeptide: Mating-type protein ALPHA2 (223 aa).

The segment at residues 151–213 (EFKKGKRFLK…NRRRKDKITE (63 aa)) is a DNA-binding region (homeobox; TALE-type).

Belongs to the TALE/M-ATYP homeobox family. Forms a heterodimer with A1.

It is found in the nucleus. Mating type proteins are sequence specific DNA-binding proteins that act as master switches in yeast differentiation by controlling gene expression in a cell type-specific fashion. Transcriptional corepressor that acts in conjunction with A1 to repress transcription of haploid-specific genes. This chain is Mating-type protein ALPHA2 (HMLALPHA2), found in Kluyveromyces lactis (strain ATCC 8585 / CBS 2359 / DSM 70799 / NBRC 1267 / NRRL Y-1140 / WM37) (Yeast).